We begin with the raw amino-acid sequence, 332 residues long: Endonuclease 8-like 2 (332 aa).

The active-site Schiff-base intermediate with DNA is Pro-2. The active-site Proton donor is Glu-3. Residue Lys-50 is the Proton donor; for beta-elimination activity of the active site. N6-acetyllysine is present on Lys-50. Positions 56-121 (FDPDEEMGPP…EDDSEYLERD (66 aa)) are disordered. Ser-68 is modified (phosphoserine). A compositionally biased stretch (basic and acidic residues) spans 74–84 (PQKEAQKEGAA). Positions 94–105 (GQKTPDGSSQSA) are enriched in polar residues. Lys-154 bears the N6-acetyllysine mark. A DNA-binding site is contributed by Asn-231. Residues 284–320 (QVYQREQCPAGHQVMKEAFGPQDGLQRLTWWCPQCQP) form an FPG-type zinc finger. Catalysis depends on Arg-310, which acts as the Proton donor; for delta-elimination activity.

It belongs to the FPG family. As to quaternary structure, binds EP300.

It is found in the nucleus. It catalyses the reaction 2'-deoxyribonucleotide-(2'-deoxyribose 5'-phosphate)-2'-deoxyribonucleotide-DNA = a 3'-end 2'-deoxyribonucleotide-(2,3-dehydro-2,3-deoxyribose 5'-phosphate)-DNA + a 5'-end 5'-phospho-2'-deoxyribonucleoside-DNA + H(+). Acetylation of Lys-50 leads to loss of DNA nicking activity. In terms of biological role, involved in base excision repair of DNA damaged by oxidation or by mutagenic agents. Has DNA glycosylase activity towards 5-hydroxyuracil and other oxidized derivatives of cytosine with a preference for mismatched double-stranded DNA (DNA bubbles). Has low or no DNA glycosylase activity towards thymine glycol, 2-hydroxyadenine, hypoxanthine and 8-oxoguanine. Has AP (apurinic/apyrimidinic) lyase activity and introduces nicks in the DNA strand. Cleaves the DNA backbone by beta-delta elimination to generate a single-strand break at the site of the removed base with both 3'- and 5'-phosphates. This Pongo abelii (Sumatran orangutan) protein is Endonuclease 8-like 2 (NEIL2).